The primary structure comprises 145 residues: Large ribosomal subunit protein uL13 (145 aa).

This sequence belongs to the universal ribosomal protein uL13 family. Part of the 50S ribosomal subunit.

Its function is as follows. This protein is one of the early assembly proteins of the 50S ribosomal subunit, although it is not seen to bind rRNA by itself. It is important during the early stages of 50S assembly. This is Large ribosomal subunit protein uL13 from Staphylococcus aureus (strain Mu3 / ATCC 700698).